The following is a 341-amino-acid chain: Ketol-acid reductoisomerase (NADP(+)) (341 aa).

Residues 2-181 (VKVYYNGDAN…GSARAGVIET (180 aa)) enclose the KARI N-terminal Rossmann domain. NADP(+) is bound by residues 25 to 28 (YGSQ), arginine 48, serine 52, and 82 to 85 (DEHQ). Histidine 107 is an active-site residue. Glycine 133 serves as a coordination point for NADP(+). The KARI C-terminal knotted domain occupies 182–327 (TFKEETETDL…RELRKMMPFV (146 aa)). Mg(2+) is bound by residues aspartate 190, glutamate 194, glutamate 226, and glutamate 230. Serine 251 lines the substrate pocket.

Belongs to the ketol-acid reductoisomerase family. The cofactor is Mg(2+).

The enzyme catalyses (2R)-2,3-dihydroxy-3-methylbutanoate + NADP(+) = (2S)-2-acetolactate + NADPH + H(+). It carries out the reaction (2R,3R)-2,3-dihydroxy-3-methylpentanoate + NADP(+) = (S)-2-ethyl-2-hydroxy-3-oxobutanoate + NADPH + H(+). It functions in the pathway amino-acid biosynthesis; L-isoleucine biosynthesis; L-isoleucine from 2-oxobutanoate: step 2/4. Its pathway is amino-acid biosynthesis; L-valine biosynthesis; L-valine from pyruvate: step 2/4. Involved in the biosynthesis of branched-chain amino acids (BCAA). Catalyzes an alkyl-migration followed by a ketol-acid reduction of (S)-2-acetolactate (S2AL) to yield (R)-2,3-dihydroxy-isovalerate. In the isomerase reaction, S2AL is rearranged via a Mg-dependent methyl migration to produce 3-hydroxy-3-methyl-2-ketobutyrate (HMKB). In the reductase reaction, this 2-ketoacid undergoes a metal-dependent reduction by NADPH to yield (R)-2,3-dihydroxy-isovalerate. The chain is Ketol-acid reductoisomerase (NADP(+)) from Anoxybacillus flavithermus (strain DSM 21510 / WK1).